A 986-amino-acid chain; its full sequence is Ubiquitin carboxyl-terminal hydrolase 37 (986 aa).

The KEN box 1 signature appears at 32 to 34; that stretch reads KDN. 2 consecutive short sequence motifs (D-box) follow at residues 71-79 and 96-105; these read CLMLTLKDT and RMYLDAVHQD. Disordered stretches follow at residues 134-238 and 251-305; these read NRQF…MSDP and LKLK…KRSL. The segment covering 149–159 has biased composition (basic and acidic residues); it reads VTVESKDETPF. The short motif at 160 to 168 is the D-box 3 element; the sequence is RKVLGTPAR. The span at 171–195 shows a compositional bias: polar residues; sequence VKNSSGTGAPSNRVNVAASPTSSVP. The KEN box 2 signature appears at 224–226; the sequence is KEN. Residues 251–260 are compositionally biased toward basic and acidic residues; the sequence is LKLKQEEENR. Residues 269–298 show a composition bias toward low complexity; it reads SSSYYGSRSSSKEYSTSSSTLDRSSVSSQT. One can recognise a USP domain in the interval 344–958; the sequence is QGFSNLGNTC…SGYIFFYMHK (615 aa). The Nucleophile role is filled by Cys353. 2 disordered regions span residues 683–710 and 729–751; these read VQRGIRKSSKRSKMEGDKPELGNAGFDG and SLSLSHDEDKPTSSPDTGFGDDE. The UIM 1 domain occupies 712–731; that stretch reads SEDELLAAVLEISKREASLS. Basic and acidic residues predominate over residues 729–739; it reads SLSLSHDEDKP. The short motif at 789–791 is the KEN box 3 element; sequence KEN. Positions 811-840 are disordered; it reads REREEQELQQALAQSLQEQEAREQKEDDDL. UIM domains are found at residues 813 to 832 and 835 to 854; these read REEQELQQALAQSLQEQEAR and KEDDDLKRATELSLQEFNSS. The span at 818-828 shows a compositional bias: low complexity; sequence LQQALAQSLQE. Residues 829–840 are compositionally biased toward basic and acidic residues; that stretch reads QEAREQKEDDDL. The Proton acceptor role is filled by His913.

It belongs to the peptidase C19 family.

The enzyme catalyses Thiol-dependent hydrolysis of ester, thioester, amide, peptide and isopeptide bonds formed by the C-terminal Gly of ubiquitin (a 76-residue protein attached to proteins as an intracellular targeting signal).. In terms of biological role, deubiquitinase that antagonizes the anaphase-promoting complex (APC/C) during G1/S transition by mediating deubiquitination of APC/C target proteins, thereby promoting S phase entry. Specifically mediates deubiquitination of 'Lys-11'-linked polyubiquitin chains, a specific ubiquitin-linkage type mediated by the APC/C complex. The polypeptide is Ubiquitin carboxyl-terminal hydrolase 37 (USP37) (Gallus gallus (Chicken)).